We begin with the raw amino-acid sequence, 349 residues long: ATPase GET3 (349 aa).

An ATP-binding site is contributed by 27 to 34 (KGGVGKTT). Residue aspartate 58 is part of the active site. Glutamate 240 and asparagine 267 together coordinate ATP. Residues cysteine 280 and cysteine 283 each contribute to the Zn(2+) site.

The protein belongs to the arsA ATPase family. Homodimer. Component of the Golgi to ER traffic (GET) complex, which is composed of GET1, GET2 and GET3. Within the complex, GET1 and GET2 form a heterotetramer which is stabilized by phosphatidylinositol binding and which binds to the GET3 homodimer. Interacts with the chloride channel protein GEF1.

The protein resides in the cytoplasm. The protein localises to the endoplasmic reticulum. It localises to the golgi apparatus. In terms of biological role, ATPase required for the post-translational delivery of tail-anchored (TA) proteins to the endoplasmic reticulum. Recognizes and selectively binds the transmembrane domain of TA proteins in the cytosol. This complex then targets to the endoplasmic reticulum by membrane-bound receptors GET1 and GET2, where the tail-anchored protein is released for insertion. This process is regulated by ATP binding and hydrolysis. ATP binding drives the homodimer towards the closed dimer state, facilitating recognition of newly synthesized TA membrane proteins. ATP hydrolysis is required for insertion. Subsequently, the homodimer reverts towards the open dimer state, lowering its affinity for the GET1-GET2 receptor, and returning it to the cytosol to initiate a new round of targeting. Cooperates with the HDEL receptor ERD2 to mediate the ATP-dependent retrieval of resident ER proteins that contain a C-terminal H-D-E-L retention signal from the Golgi to the ER. Involved in low-level resistance to the oxyanions arsenite and arsenate, and in heat tolerance. The polypeptide is ATPase GET3 (Eremothecium gossypii (strain ATCC 10895 / CBS 109.51 / FGSC 9923 / NRRL Y-1056) (Yeast)).